Here is a 98-residue protein sequence, read N- to C-terminus: Small ribosomal subunit protein uS19 (98 aa).

It belongs to the universal ribosomal protein uS19 family.

Functionally, protein S19 forms a complex with S13 that binds strongly to the 16S ribosomal RNA. This Chlorobaculum parvum (strain DSM 263 / NCIMB 8327) (Chlorobium vibrioforme subsp. thiosulfatophilum) protein is Small ribosomal subunit protein uS19.